Reading from the N-terminus, the 115-residue chain is Large ribosomal subunit protein P2 (115 aa).

Met-1 carries the post-translational modification N-acetylmethionine. Phosphoserine is present on residues Ser-17 and Ser-19. Residue Lys-21 is modified to N6-acetyllysine; alternate. Lys-21 is modified (N6-succinyllysine; alternate). The span at Gly-78–Ala-90 shows a compositional bias: low complexity. The interval Gly-78–Asp-115 is disordered. Phosphoserine occurs at positions 79 and 86. Residues Ala-91–Glu-101 are compositionally biased toward basic and acidic residues. A phosphoserine mark is found at Ser-102 and Ser-105.

The protein belongs to the eukaryotic ribosomal protein P1/P2 family. In terms of assembly, heterodimer with P1 at the lateral ribosomal stalk of the large ribosomal subunit.

In terms of biological role, plays an important role in the elongation step of protein synthesis. This is Large ribosomal subunit protein P2 (RPLP2) from Homo sapiens (Human).